The following is a 362-amino-acid chain: Metacaspase-3 (362 aa).

Catalysis depends on residues His-174 and Cys-230.

This sequence belongs to the peptidase C14B family.

The polypeptide is Metacaspase-3 (AMC3) (Arabidopsis thaliana (Mouse-ear cress)).